The following is an 88-amino-acid chain: Large ribosomal subunit protein bL27 (88 aa).

Positions 1-21 (MAHKKGQGSTQNNRDSAGRRL) are disordered.

This sequence belongs to the bacterial ribosomal protein bL27 family.

The polypeptide is Large ribosomal subunit protein bL27 (Helicobacter acinonychis (strain Sheeba)).